The chain runs to 196 residues: Pyridoxal 5'-phosphate synthase subunit PdxT (196 aa).

L-glutamine is bound at residue 47–49 (GES). Cys79 serves as the catalytic Nucleophile. L-glutamine-binding positions include Arg106 and 134–135 (IR). Active-site charge relay system residues include His170 and Glu172.

Belongs to the glutaminase PdxT/SNO family. As to quaternary structure, in the presence of PdxS, forms a dodecamer of heterodimers. Only shows activity in the heterodimer.

The enzyme catalyses aldehydo-D-ribose 5-phosphate + D-glyceraldehyde 3-phosphate + L-glutamine = pyridoxal 5'-phosphate + L-glutamate + phosphate + 3 H2O + H(+). It carries out the reaction L-glutamine + H2O = L-glutamate + NH4(+). It participates in cofactor biosynthesis; pyridoxal 5'-phosphate biosynthesis. Its function is as follows. Catalyzes the hydrolysis of glutamine to glutamate and ammonia as part of the biosynthesis of pyridoxal 5'-phosphate. The resulting ammonia molecule is channeled to the active site of PdxS. The protein is Pyridoxal 5'-phosphate synthase subunit PdxT of Bacillus cereus (strain ZK / E33L).